A 343-amino-acid polypeptide reads, in one-letter code: MGSAEDRRFEVLRAIVADFVATKEPIGSKTLVDRHNLGVSSATVRNDMAVLEAEGYITQPHTSSGRVPTEKGYREFVDRLDDVKPMSSAERRAILSFLESGVDLDDVLRRAVRLLAQLTRQVAVVQYPMLSTSTVRRLEVVALTPARLLLIVITDSGRIDQRIVELGDAIDEDELTQLRDLLGQALEGKPLTTASIAVSDLASHLGGQGRLANAVGRSATVLVESLVEHREERLLLGGTANLTRNTADFGGSLRSLLEALEEQVVVLRLLAKQQEAGKVTVRIGHETEAEEMAGASVVTTAYGSAGKVFGGMGVLGPTRMDYPGTIANVAAVALYIGEVLGNR.

Belongs to the HrcA family.

Functionally, negative regulator of class I heat shock genes (grpE-dnaK-dnaJ and groELS operons). Prevents heat-shock induction of these operons. The protein is Heat-inducible transcription repressor HrcA of Mycolicibacterium gilvum (strain PYR-GCK) (Mycobacterium gilvum (strain PYR-GCK)).